The sequence spans 182 residues: Ribosome-recycling factor (182 aa).

It belongs to the RRF family.

Its subcellular location is the cytoplasm. Responsible for the release of ribosomes from messenger RNA at the termination of protein biosynthesis. May increase the efficiency of translation by recycling ribosomes from one round of translation to another. The protein is Ribosome-recycling factor of Mycoplasma capricolum subsp. capricolum (strain California kid / ATCC 27343 / NCTC 10154).